A 317-amino-acid polypeptide reads, in one-letter code: Melanocyte-stimulating hormone receptor (317 aa).

At 1-37 the chain is on the extracellular side; it reads MPAQGSQRSXLGSLNSTLMATPSLGLAANQSGPQCLE. 2 N-linked (GlcNAc...) asparagine glycosylation sites follow: Asn15 and Asn29. A helical transmembrane segment spans residues 38-63; sequence VSVPDGLFLCLGLVSLVENMLVVAAI. Topologically, residues 64–72 are cytoplasmic; that stretch reads AKNRNLHSP. A helical transmembrane segment spans residues 73–93; it reads MYCFICCLALSDLLVSISNVL. Topologically, residues 94-118 are extracellular; it reads ETAVMLLLEAGALAVGATVVQQLDN. A helical transmembrane segment spans residues 119–140; the sequence is VIDVLICSSMVSSLCFLGAIAM. Over 141–163 the chain is Cytoplasmic; that stretch reads DRYISIFYALRYHSIVTLSRAQW. The helical transmembrane segment at 164–183 threads the bilayer; sequence ATAAVWAASILSSTLFIAYY. Topologically, residues 184–191 are extracellular; sequence DRTVVLLC. The helical transmembrane segment at 192-211 threads the bilayer; sequence LVVFFLAMLVLMAVLYAHML. The Cytoplasmic portion of the chain corresponds to 212–240; it reads TQACQHVQGITRLHKRQHLVQQGFGLKGA. Residues 241–266 traverse the membrane as a helical segment; the sequence is ATLTILLGVFLLCWGPFFLHLTLIAV. At 267 to 279 the chain is on the extracellular side; it reads CPQHPTCSCVFKN. The chain crosses the membrane as a helical span at residues 280–300; sequence FKLFLALIICNAIVDPLIYAF. Residues 301–317 are Cytoplasmic-facing; the sequence is RSQELRKTLKEVLLFSW.

It belongs to the G-protein coupled receptor 1 family. In terms of assembly, interacts with MGRN1, but does not undergo MGRN1-mediated ubiquitination; this interaction competes with GNAS-binding and thus inhibits agonist-induced cAMP production. Interacts with OPN3; the interaction results in a decrease in MC1R-mediated cAMP signaling and ultimately a decrease in melanin production in melanocytes.

It is found in the cell membrane. Its function is as follows. Receptor for MSH (alpha, beta and gamma) and ACTH. The activity of this receptor is mediated by G proteins which activate adenylate cyclase. Mediates melanogenesis, the production of eumelanin (black/brown) and phaeomelanin (red/yellow), via regulation of cAMP signaling in melanocytes. In Galago senegalensis (Northern lesser bushbaby), this protein is Melanocyte-stimulating hormone receptor (MC1R).